A 95-amino-acid polypeptide reads, in one-letter code: Putative regulatory protein Daud_1598 (95 aa).

It belongs to the RemA family.

The polypeptide is Putative regulatory protein Daud_1598 (Desulforudis audaxviator (strain MP104C)).